Here is a 128-residue protein sequence, read N- to C-terminus: Large-conductance mechanosensitive channel (128 aa).

Transmembrane regions (helical) follow at residues 10-30 and 76-96; these read FAMR…GAFG and GLFI…FMMV.

It belongs to the MscL family. Homopentamer.

Its subcellular location is the cell inner membrane. Channel that opens in response to stretch forces in the membrane lipid bilayer. May participate in the regulation of osmotic pressure changes within the cell. The polypeptide is Large-conductance mechanosensitive channel (Mannheimia succiniciproducens (strain KCTC 0769BP / MBEL55E)).